The sequence spans 311 residues: Malate dehydrogenase (311 aa).

Residues Gly-7–Gly-13 and Asp-34 contribute to the NAD(+) site. Residues Arg-81 and Arg-87 each coordinate substrate. Residues Asn-94 and Ile-117–Asn-119 contribute to the NAD(+) site. Positions 119 and 153 each coordinate substrate. The Proton acceptor role is filled by His-177. Met-227 is an NAD(+) binding site.

The protein belongs to the LDH/MDH superfamily. MDH type 1 family. In terms of assembly, homodimer.

The enzyme catalyses (S)-malate + NAD(+) = oxaloacetate + NADH + H(+). Its function is as follows. Catalyzes the reversible oxidation of malate to oxaloacetate. The protein is Malate dehydrogenase of Pseudoalteromonas atlantica (strain T6c / ATCC BAA-1087).